The primary structure comprises 239 residues: Glucosamine-6-phosphate deaminase (239 aa).

Asp62 serves as the catalytic Proton acceptor; for enolization step. Catalysis depends on Asn128, which acts as the For ring-opening step. His130 (proton acceptor; for ring-opening step) is an active-site residue. The active-site For ring-opening step is Glu135.

The protein belongs to the glucosamine/galactosamine-6-phosphate isomerase family. NagB subfamily.

The enzyme catalyses alpha-D-glucosamine 6-phosphate + H2O = beta-D-fructose 6-phosphate + NH4(+). It participates in amino-sugar metabolism; N-acetylneuraminate degradation; D-fructose 6-phosphate from N-acetylneuraminate: step 5/5. Functionally, catalyzes the reversible isomerization-deamination of glucosamine 6-phosphate (GlcN6P) to form fructose 6-phosphate (Fru6P) and ammonium ion. The protein is Glucosamine-6-phosphate deaminase of Lactobacillus acidophilus (strain ATCC 700396 / NCK56 / N2 / NCFM).